Here is a 293-residue protein sequence, read N- to C-terminus: MEGALDAQSLISLSLRKIHNSRTQRGGIKLHKNLLVSYVLRNARQLYLSERYAELYRRQPFPQTMDECDEPDIPELSPLQIPEEGEDEMHQLPRIHSGGAELLEPLSSEETLELPPCAHSPHPAKEPQSHAAFYSPVPSRGFCSSGESAGPPQCSHTTVLDLDTHVVTTVESGYLHQDCPCQGAPLLSKRKYAPAGYGSYSGHGGPGEDLGDTAEPSFVPCKRGRYEDFCPQPLGEPADSNNNNISNLISIFGSGFSGLMSRQTEAEQTLNGHLCGKHALGSLGAWTRAIVAF.

This sequence belongs to the IER family.

The sequence is that of Immediate early response gene 5-like protein (ier5l) from Xenopus laevis (African clawed frog).